The sequence spans 1014 residues: Regulator of telomere elongation helicase 1 homolog (1014 aa).

Residues 7–324 (AGIPVHFPFE…KEMLLELEKA (318 aa)) form the Helicase ATP-binding domain. 42 to 49 (SPTGTGKT) lines the ATP pocket. The [4Fe-4S] cluster site is built by Cys-147, Cys-165, Cys-174, and Cys-210. The DEAH box motif lies at 253-256 (DEAH). Thr-873 carries the post-translational modification Phosphothreonine. A disordered region spans residues 891 to 917 (TDMVKTEPGTSNSCSYGNTSSSGSDSR). Over residues 899–917 (GTSNSCSYGNTSSSGSDSR) the composition is skewed to low complexity.

It belongs to the helicase family. RAD3/XPD subfamily.

Its subcellular location is the nucleus. It carries out the reaction ATP + H2O = ADP + phosphate + H(+). Functionally, a probable ATP-dependent DNA helicase implicated in DNA repair and the maintenance of genomic stability. Acts as an anti-recombinase to counteract toxic recombination and limit crossover during meiosis. Regulates meiotic recombination and crossover homeostasis by physically dissociating strand invasion events and thereby promotes noncrossover repair by meiotic synthesis dependent strand annealing (SDSA) as well as disassembly of D loop recombination intermediates. This chain is Regulator of telomere elongation helicase 1 homolog, found in Drosophila mojavensis (Fruit fly).